The following is a 568-amino-acid chain: MNTEVLGVIAQIVLMVVLSYPLGKYIAKVYKGEKTWSDFMKPVERVMFKLSGINPNEEMNWKQFLRALLVVNLFWFLWGMVLLVTQGVLPLNPDGNVGQTAHQAFNTCISFMVNCNLQHYSGESGLTYFTQLFVIMLFQFITAATGMAAMAGIMKALAAKTTQTIGNFWNYLVLSCTRVLLPLSLVVGFILIVQGTPMGFDGKMKVTTMEGATQYVSQGPTAAIVPIKQLGTNGGGYFGVNSSHPLENPTYFANMVECWSILIIPMAMAFAFGFYLKRKKLGYSIYGVMLFAYLVGVCINVSQEMGGNPRIDEMGIAQDNGAMEGKEIRLGSAATALWSITTTVTSNGSVNGMHDSTMPLSGMMEMLNMQINTWFGGVGVGWMNYFTFIIIAVFISGLMVGRTPEFLGHKVEAREMKIASIVALLHPFIILVGTALAAYLFVHAPAFVESEGGWLNNPGYHGLSEMLYEYTSCAANNGSGFEGLGDNTWFWNYSCGIVLILGRFVPIVGQVAIAGILAKKKFIPESAGTLQTDTVTFGVMTFAVIFIVAALSFFPVHALSTIAEHLSL.

The next 10 membrane-spanning stretches (helical) occupy residues 3-23 (TEVL…YPLG), 68-88 (LLVV…TQGV), 133-153 (FVIM…MAGI), 180-200 (LLPL…PMGF), 256-276 (VECW…GFYL), 281-301 (LGYS…CINV), 375-395 (FGGV…AVFI), 421-441 (IVAL…AYLF), 497-517 (IVLI…AGIL), and 535-555 (VTFG…SFFP).

Belongs to the KdpA family. In terms of assembly, the system is composed of three essential subunits: KdpA, KdpB and KdpC.

It localises to the cell inner membrane. In terms of biological role, part of the high-affinity ATP-driven potassium transport (or Kdp) system, which catalyzes the hydrolysis of ATP coupled with the electrogenic transport of potassium into the cytoplasm. This subunit binds the periplasmic potassium ions and delivers the ions to the membrane domain of KdpB through an intramembrane tunnel. The chain is Potassium-transporting ATPase potassium-binding subunit from Phocaeicola vulgatus (strain ATCC 8482 / DSM 1447 / JCM 5826 / CCUG 4940 / NBRC 14291 / NCTC 11154) (Bacteroides vulgatus).